Here is a 609-residue protein sequence, read N- to C-terminus: Albumin (609 aa).

The first 18 residues, 1-18 (MKWVTFISLLFLFSSAYS), serve as a signal peptide directing secretion. The propeptide occupies 19–24 (RGVFRR). 3 Albumin domains span residues 19–210 (RGVF…DELR), 211–403 (DEGK…EFKP), and 404–601 (LVEE…KLVA). His27 lines the Cu cation pocket. Ser29 carries the post-translational modification Phosphoserine; by FAM20C. Ca(2+) is bound at residue Glu30. N-linked (Glc) (glycation) lysine glycosylation is present at Lys36. Asp37 serves as a coordination point for Ca(2+). N-linked (Glc) (glycation) lysine; in vitro glycosylation is present at Lys75. Cys77 and Cys86 are disulfide-bonded. Residues Ser82 and Ser89 each carry the phosphoserine; by FAM20C modification. Residue His91 participates in Zn(2+) binding. Intrachain disulfides connect Cys99/Cys115, Cys114/Cys125, Cys148/Cys193, and Cys192/Cys201. Thr107 is modified (phosphothreonine; by FAM20C). N-linked (Glc) (glycation) lysine; in vitro glycans are attached at residues Lys161 and Lys186. Lys223 carries an N-linked (Glc) (glycation) lysine; in vitro glycan. Cystine bridges form between Cys224–Cys270 and Cys269–Cys277. Position 229 is an N6-succinyllysine (Lys229). N-linked (Glc) (glycation) lysine; in vitro glycosylation is present at Lys249. Lys257 carries N-linked (Glc) (glycation) lysine glycosylation. Lys264 is a (4Z,15Z)-bilirubin IXalpha binding site. A Ca(2+)-binding site is contributed by Glu268. Residues His271 and Asp273 each coordinate Zn(2+). 4 residues coordinate Ca(2+): Asp273, Glu276, Asp279, and Asp283. Disulfide bonds link Cys289–Cys303 and Cys302–Cys313. Ser297 bears the Phosphoserine mark. Lys300 carries an N-linked (Glc) (glycation) lysine; in vitro glycan. The N-linked (Glc) (glycation) lysine glycan is linked to Lys305. Lys337 carries an N-linked (Glc) (glycation) lysine; in vitro glycan. 2 disulfides stabilise this stretch: Cys340–Cys385 and Cys384–Cys393. N-linked (Glc) (glycation) lysine glycosylation is present at Lys341. Residue Asn342 is glycosylated (N-linked (GlcNAc...) asparagine; in variant Redhill). The N-linked (Glc) (glycation) lysine; in vitro glycan is linked to Lys347. An N-linked (Glc) (glycation) lysine glycan is attached at Lys375. N-linked (Glc) (glycation) lysine; in vitro glycans are attached at residues Lys402 and Lys437. Intrachain disulfides connect Cys416–Cys462, Cys461–Cys472, Cys485–Cys501, and Cys500–Cys511. Phosphoserine is present on Ser443. A phosphothreonine mark is found at Thr444 and Thr446. At Lys460 the chain carries N6-succinyllysine. The N-linked (Glc) (glycation) lysine glycan is linked to Lys463. Lys468 carries an N-linked (Glc) (glycation) lysine; in vitro glycan. Ser513 bears the Phosphoserine mark. The N-linked (GlcNAc...) asparagine; in variant Casebrook glycan is linked to Asp518. 2 disulfide bridges follow: Cys538/Cys583 and Cys582/Cys591. Position 543 is an N6-succinyllysine (Lys543). Lys549 is a glycosylation site (N-linked (Glc) (glycation) lysine). Lys558 bears the N6-methyllysine; alternate mark. Lys558 is a glycosylation site (N-linked (Glc) (glycation) lysine; alternate). N-linked (Glc) (glycation) lysine; in vitro glycans are attached at residues Lys560 and Lys569. An N6-succinyllysine modification is found at Lys588. Lys597 carries an N-linked (Glc) (glycation) lysine; in vitro glycan.

This sequence belongs to the ALB/AFP/VDB family. In terms of assembly, interacts with FCGRT; this interaction regulates ALB homeostasis. Interacts with TASOR. In plasma, occurs in a covalently-linked complex with chromophore-bound alpha-1-microglobulin with molar ratio 1:2 and 1:1; this interaction does not prevent fatty acid binding to ALB. Kenitra variant is partially O-glycosylated at Thr-620. It has two new disulfide bonds Cys-600 to Cys-602 and Cys-601 to Cys-606. In terms of processing, glycated in diabetic patients. Post-translationally, phosphorylated by FAM20C in the extracellular medium. Acetylated on Lys-223 by acetylsalicylic acid. In terms of tissue distribution, plasma.

It localises to the secreted. Functionally, binds water, Ca(2+), Na(+), K(+), fatty acids, hormones, bilirubin and drugs. Its main function is the regulation of the colloidal osmotic pressure of blood. Major zinc transporter in plasma, typically binds about 80% of all plasma zinc. Major calcium and magnesium transporter in plasma, binds approximately 45% of circulating calcium and magnesium in plasma. Potentially has more than two calcium-binding sites and might additionally bind calcium in a non-specific manner. The shared binding site between zinc and calcium at residue Asp-273 suggests a crosstalk between zinc and calcium transport in the blood. The rank order of affinity is zinc &gt; calcium &gt; magnesium. Binds to the bacterial siderophore enterobactin and inhibits enterobactin-mediated iron uptake of E.coli from ferric transferrin, and may thereby limit the utilization of iron and growth of enteric bacteria such as E.coli. Does not prevent iron uptake by the bacterial siderophore aerobactin. In Homo sapiens (Human), this protein is Albumin (ALB).